The primary structure comprises 268 residues: Glutamate racemase (268 aa).

Substrate is bound by residues 13 to 14 (DS) and 45 to 46 (YG). The active-site Proton donor/acceptor is the Cys-77. Substrate is bound at residue 78 to 79 (NT). Cys-185 functions as the Proton donor/acceptor in the catalytic mechanism. Position 186-187 (186-187 (TH)) interacts with substrate.

Belongs to the aspartate/glutamate racemases family.

It catalyses the reaction L-glutamate = D-glutamate. It functions in the pathway cell wall biogenesis; peptidoglycan biosynthesis. Its function is as follows. Provides the (R)-glutamate required for cell wall biosynthesis. This is Glutamate racemase from Vibrio campbellii (strain ATCC BAA-1116).